Reading from the N-terminus, the 295-residue chain is Ribosomal protein L11 methyltransferase (295 aa).

Residues threonine 138, glycine 161, aspartate 183, and asparagine 230 each coordinate S-adenosyl-L-methionine.

It belongs to the methyltransferase superfamily. PrmA family.

The protein resides in the cytoplasm. It catalyses the reaction L-lysyl-[protein] + 3 S-adenosyl-L-methionine = N(6),N(6),N(6)-trimethyl-L-lysyl-[protein] + 3 S-adenosyl-L-homocysteine + 3 H(+). Its function is as follows. Methylates ribosomal protein L11. The sequence is that of Ribosomal protein L11 methyltransferase from Bradyrhizobium diazoefficiens (strain JCM 10833 / BCRC 13528 / IAM 13628 / NBRC 14792 / USDA 110).